The chain runs to 737 residues: MEQTYEYAWIIPFIPLPVPMLIGAGLILFPTATKRFRRMWAFQSVLLLSIVMIFSIYLSIQQINSSSVYQYVWSWIINNDFSLDFGYLIDPLTSIMSILITTVGIMVLIYSDNYMAHDQGYLRFFAYMSFFSTSMLGLVTSSNLIQIYIFWELVGLCSYLLIGFWFTRPVAANACQKAFVTNRVGDFGLLLGILGFYWITGSFEFRDLFEIFNNLIYNNELNFLFVTLCAVLLFAGAVAKSAQFPLHVWLPDAMEGPTPISALIHAATMVAAGIFLVARLLPLFRVIPYIMYLISVIGIITVLLGATLALAQKDIKRGLAYSTMSQLGYMMLALGMGSYRSALFHLITHAYSKALLFLGSGSIIHSMETIVGYSPAKSQNMGLMGGLRKHVPITKITFLLGTLSLCGIPPLACFWSKDEILNDSWLYSPIFAIIAWATAGLTAFYMFRIYLLTFEGHLNAHFQNYGGKQKIPFYSISLWGKNGVKKNSCLLTMNNNESTYFLSKTKYPIAKNGRKMTRPFMTIAHFKHKAVSSYPYESDNTMLFPIFVLGLFTLFVGAIGIPFNQEGVNLDILSKWLAPSINLLHPKSNNSLDWNEFLKDAVVSVSIAYFGIFIASFLYKPIYSSLKNLEFINSFVKKGPKRILWDKILNGIYDWSYNRAYIDAFYTRFFVGGIRGLAEFTHFVDRRVIDGMTNGVGVISFIVGEGIKYIGGGRISSYLFLYLAYVSVFLLVYYLLF.

Helical transmembrane passes span 9–29 (WIIPFIPLPVPMLIGAGLILF), 40–60 (WAFQSVLLLSIVMIFSIYLSI), 89–109 (IDPLTSIMSILITTVGIMVLI), 125–145 (FAYMSFFSTSMLGLVTSSNLI), 147–167 (IYIFWELVGLCSYLLIGFWFT), 185–205 (GDFGLLLGILGFYWITGSFEF), 219–239 (NELNFLFVTLCAVLLFAGAVA), 258–278 (TPISALIHAATMVAAGIFLVA), 286–306 (VIPYIMYLISVIGIITVLLGA), 327–347 (LGYMMLALGMGSYRSALFHLI), 354–374 (ALLFLGSGSIIHSMETIVGYS), 396–416 (ITFLLGTLSLCGIPPLACFWS), 425–445 (WLYSPIFAIIAWATAGLTAFY), 543–563 (LFPIFVLGLFTLFVGAIGIPF), 602–622 (VVSVSIAYFGIFIASFLYKPI), and 717–737 (SYLFLYLAYVSVFLLVYYLLF).

Belongs to the complex I subunit 5 family. NDH is composed of at least 16 different subunits, 5 of which are encoded in the nucleus.

It localises to the plastid. Its subcellular location is the chloroplast thylakoid membrane. It catalyses the reaction a plastoquinone + NADH + (n+1) H(+)(in) = a plastoquinol + NAD(+) + n H(+)(out). It carries out the reaction a plastoquinone + NADPH + (n+1) H(+)(in) = a plastoquinol + NADP(+) + n H(+)(out). In terms of biological role, NDH shuttles electrons from NAD(P)H:plastoquinone, via FMN and iron-sulfur (Fe-S) centers, to quinones in the photosynthetic chain and possibly in a chloroplast respiratory chain. The immediate electron acceptor for the enzyme in this species is believed to be plastoquinone. Couples the redox reaction to proton translocation, and thus conserves the redox energy in a proton gradient. This is NAD(P)H-quinone oxidoreductase subunit 5, chloroplastic (ndhF) from Solanum lycopersicum (Tomato).